A 269-amino-acid polypeptide reads, in one-letter code: ATP synthase subunit delta (269 aa).

The protein belongs to the ATPase delta chain family. As to quaternary structure, F-type ATPases have 2 components, F(1) - the catalytic core - and F(0) - the membrane proton channel. F(1) has five subunits: alpha(3), beta(3), gamma(1), delta(1), epsilon(1). F(0) has three main subunits: a(1), b(2) and c(10-14). The alpha and beta chains form an alternating ring which encloses part of the gamma chain. F(1) is attached to F(0) by a central stalk formed by the gamma and epsilon chains, while a peripheral stalk is formed by the delta and b chains.

The protein localises to the cell membrane. F(1)F(0) ATP synthase produces ATP from ADP in the presence of a proton or sodium gradient. F-type ATPases consist of two structural domains, F(1) containing the extramembraneous catalytic core and F(0) containing the membrane proton channel, linked together by a central stalk and a peripheral stalk. During catalysis, ATP synthesis in the catalytic domain of F(1) is coupled via a rotary mechanism of the central stalk subunits to proton translocation. Its function is as follows. This protein is part of the stalk that links CF(0) to CF(1). It either transmits conformational changes from CF(0) to CF(1) or is implicated in proton conduction. The sequence is that of ATP synthase subunit delta from Thermobifida fusca (strain YX).